Here is a 393-residue protein sequence, read N- to C-terminus: NAD(P)H-quinone oxidoreductase subunit H, chloroplastic (393 aa).

Belongs to the complex I 49 kDa subunit family. As to quaternary structure, NDH is composed of at least 16 different subunits, 5 of which are encoded in the nucleus.

It is found in the plastid. The protein resides in the chloroplast thylakoid membrane. The catalysed reaction is a plastoquinone + NADH + (n+1) H(+)(in) = a plastoquinol + NAD(+) + n H(+)(out). It carries out the reaction a plastoquinone + NADPH + (n+1) H(+)(in) = a plastoquinol + NADP(+) + n H(+)(out). Functionally, NDH shuttles electrons from NAD(P)H:plastoquinone, via FMN and iron-sulfur (Fe-S) centers, to quinones in the photosynthetic chain and possibly in a chloroplast respiratory chain. The immediate electron acceptor for the enzyme in this species is believed to be plastoquinone. Couples the redox reaction to proton translocation, and thus conserves the redox energy in a proton gradient. The protein is NAD(P)H-quinone oxidoreductase subunit H, chloroplastic of Chlorokybus atmophyticus (Soil alga).